A 409-amino-acid chain; its full sequence is Probable glutaryl-CoA dehydrogenase, mitochondrial (409 aa).

Arg-110 to Ser-111 contacts substrate. Residues Phe-149–Thr-152, Ser-158, and Trp-184–Ser-186 contribute to the FAD site. Residue Ser-158 participates in substrate binding. Substrate contacts are provided by residues Phe-261–Asn-265 and Arg-268. The active-site Proton acceptor is the Glu-388. 2 residues coordinate FAD: Thr-390 and Phe-408.

It belongs to the acyl-CoA dehydrogenase family. The cofactor is FAD.

The protein resides in the mitochondrion matrix. It carries out the reaction glutaryl-CoA + oxidized [electron-transfer flavoprotein] + 2 H(+) = (2E)-butenoyl-CoA + reduced [electron-transfer flavoprotein] + CO2. The protein operates within amino-acid metabolism; lysine degradation. Its pathway is amino-acid metabolism; tryptophan metabolism. The polypeptide is Probable glutaryl-CoA dehydrogenase, mitochondrial (Caenorhabditis elegans).